The sequence spans 347 residues: Quinolinate synthase (347 aa).

2 residues coordinate iminosuccinate: His47 and Ser68. Cys113 is a binding site for [4Fe-4S] cluster. Residues 139-141 (YAN) and Ser156 contribute to the iminosuccinate site. Cys200 provides a ligand contact to [4Fe-4S] cluster. Iminosuccinate-binding positions include 226–228 (HPE) and Thr243. Residue Cys297 participates in [4Fe-4S] cluster binding.

This sequence belongs to the quinolinate synthase family. Type 1 subfamily. The cofactor is [4Fe-4S] cluster.

The protein localises to the cytoplasm. It carries out the reaction iminosuccinate + dihydroxyacetone phosphate = quinolinate + phosphate + 2 H2O + H(+). It participates in cofactor biosynthesis; NAD(+) biosynthesis; quinolinate from iminoaspartate: step 1/1. Catalyzes the condensation of iminoaspartate with dihydroxyacetone phosphate to form quinolinate. The sequence is that of Quinolinate synthase from Salmonella enteritidis PT4 (strain P125109).